The following is a 181-amino-acid chain: dTTP/UTP pyrophosphatase (181 aa).

Residue aspartate 67 is the Proton acceptor of the active site.

It belongs to the Maf family. YhdE subfamily. Requires a divalent metal cation as cofactor.

The protein resides in the cytoplasm. The catalysed reaction is dTTP + H2O = dTMP + diphosphate + H(+). It catalyses the reaction UTP + H2O = UMP + diphosphate + H(+). Its function is as follows. Nucleoside triphosphate pyrophosphatase that hydrolyzes dTTP and UTP. May have a dual role in cell division arrest and in preventing the incorporation of modified nucleotides into cellular nucleic acids. The polypeptide is dTTP/UTP pyrophosphatase (Latilactobacillus sakei subsp. sakei (strain 23K) (Lactobacillus sakei subsp. sakei)).